The primary structure comprises 392 residues: Galactokinase (392 aa).

Alpha-D-galactose contacts are provided by Arg-37, Glu-43, His-44, and Asp-46. ATP is bound by residues Gly-136, Gly-138, Ser-140, and Ser-141. Asp-186 is an alpha-D-galactose binding site. Asp-186 acts as the Proton acceptor in catalysis. Phosphoserine is present on Ser-230. Residue Tyr-236 coordinates alpha-D-galactose.

It belongs to the GHMP kinase family. GalK subfamily. Homodimer.

The catalysed reaction is alpha-D-galactose + ATP = alpha-D-galactose 1-phosphate + ADP + H(+). It functions in the pathway carbohydrate metabolism; galactose metabolism. Catalyzes the transfer of a phosphate from ATP to alpha-D-galactose and participates in the first committed step in the catabolism of galactose. The sequence is that of Galactokinase (Galk1) from Mus musculus (Mouse).